Consider the following 291-residue polypeptide: RPE-retinal G protein-coupled receptor (291 aa).

The Extracellular portion of the chain corresponds to 1-15; the sequence is MAATRALPAGLGELE. The helical transmembrane segment at 16–36 threads the bilayer; that stretch reads VLAVGTVLLMEALSGISLNGL. The Cytoplasmic segment spans residues 37–52; sequence TIFSFCKTPDLRTPSN. Residues 53-73 form a helical membrane-spanning segment; it reads LLVLSLALADTGISLNALVAA. Over 74 to 91 the chain is Extracellular; sequence VSSLLRRWPHGSEGCQVH. A disulfide bond links C88 and C162. The chain crosses the membrane as a helical span at residues 92-112; it reads GFQGFATALASICGSAAVAWG. Residues 113–130 lie on the Cytoplasmic side of the membrane; that stretch reads RYHHYCTRRQLAWDTAIP. Residues 131–151 traverse the membrane as a helical segment; sequence LVLFVWMSSAFWASLPLMGWG. Residues 152–175 are Extracellular-facing; it reads HYDYEPVGTCCTLDYSRGDRNFIS. Residues 176–196 traverse the membrane as a helical segment; it reads FLFTMAFFNFLVPLFITHTSY. Residues 197-219 are Cytoplasmic-facing; that stretch reads RFMEQKFSRSGHLPVNTTLPGRM. Residues 220–240 form a helical membrane-spanning segment; the sequence is LLLGWGPYALLYLYAAIADVS. Residues 241 to 247 lie on the Extracellular side of the membrane; it reads FISPKLQ. The helical transmembrane segment at 248–268 threads the bilayer; the sequence is MVPALIAKTMPTINAINYALH. At K255 the chain carries N6-(retinylidene)lysine. The Cytoplasmic portion of the chain corresponds to 269-291; it reads REMVCRGTWQCLSPQKSKKDRTQ.

It belongs to the G-protein coupled receptor 1 family. Opsin subfamily. Post-translationally, covalently binds all-trans- and 11-cis-retinal.

The protein resides in the membrane. Functionally, receptor for all-trans- and 11-cis-retinal. Binds preferentially to the former and may catalyze the isomerization of the chromophore by a retinochrome-like mechanism. The protein is RPE-retinal G protein-coupled receptor (Rgr) of Mus musculus (Mouse).